The following is a 187-amino-acid chain: Oligoribonuclease (187 aa).

The Exonuclease domain maps to 7 to 170 (LIWIDLEMTG…DDIKDSINEL (164 aa)). The active site involves tyrosine 128.

The protein belongs to the oligoribonuclease family.

It is found in the cytoplasm. Its function is as follows. 3'-to-5' exoribonuclease specific for small oligoribonucleotides. The protein is Oligoribonuclease of Legionella pneumophila (strain Paris).